A 64-amino-acid polypeptide reads, in one-letter code: Alpha-mammal toxin AnCra1 (64 aa).

One can recognise an LCN-type CS-alpha/beta domain in the interval 2–64 (KDGYIVDDVN…VRTKGPGRCN (63 aa)). 4 disulfide bridges follow: C12–C63, C16–C36, C22–C46, and C26–C48.

This sequence belongs to the long (4 C-C) scorpion toxin superfamily. Sodium channel inhibitor family. Alpha subfamily. Expressed by the venom gland.

It is found in the secreted. Alpha toxins bind voltage-independently at site-3 of sodium channels (Nav) and inhibit the inactivation of the activated channels, thereby blocking neuronal transmission. This toxin is active against mammals. The recombinant toxin selectively inhibits the fast inactivation of hNav1.7/SCN9A channel (EC(50)=136.7 nM). Is potent in inhibiting the fast inactivation of hNav1.7 and has little effect on the steady-state inactivation. In vivo, intravenous injection into mice induces muscle contraction, leading to severe paralysis and death. This Androctonus crassicauda (Arabian fat-tailed scorpion) protein is Alpha-mammal toxin AnCra1.